We begin with the raw amino-acid sequence, 246 residues long: DNA repair protein RecO (246 aa).

The protein belongs to the RecO family.

Involved in DNA repair and RecF pathway recombination. This chain is DNA repair protein RecO, found in Cutibacterium acnes (strain DSM 16379 / KPA171202) (Propionibacterium acnes).